We begin with the raw amino-acid sequence, 155 residues long: Small ribosomal subunit protein uS7 (155 aa).

The protein belongs to the universal ribosomal protein uS7 family. Part of the 30S ribosomal subunit. Contacts proteins S9 and S11.

Functionally, one of the primary rRNA binding proteins, it binds directly to 16S rRNA where it nucleates assembly of the head domain of the 30S subunit. Is located at the subunit interface close to the decoding center, probably blocks exit of the E-site tRNA. The chain is Small ribosomal subunit protein uS7 from Thermotoga petrophila (strain ATCC BAA-488 / DSM 13995 / JCM 10881 / RKU-1).